The chain runs to 372 residues: MHNESPIIRRKSTRIYVGDVPIGDGAPIAVQSMTNTRTTDVAATVAQIKALENVGADIVRVSVPTMDAAEAFKLIKQQVSIPLVADIHFDYRIALKVAEYGVDCLRINPGNIGNEERIRSVVDCARDKNIPIRIGVNGGSLEKDLQMKYGEPTPEALVESAMRHVDILDRLNFDQFKVSVKASDVFLAVDSYRLLAKKIDQPLHLGITEAGGARAGAVKSAVGLGMLLAEGIGDTLRISLAANPVEEIKVGFDILKSLRIRSRGINFIACPSCSRQEFDVISTVNALEERLEDIITPMDVSIIGCVVNGPGEAEVSHLGLAGSNKKSAFYEDGKRQKERFDNEDLVNQLEAKIRAKAARMDESNRIDIKVQN.

The [4Fe-4S] cluster site is built by Cys270, Cys273, Cys305, and Glu312.

It belongs to the IspG family. [4Fe-4S] cluster is required as a cofactor.

The catalysed reaction is (2E)-4-hydroxy-3-methylbut-2-enyl diphosphate + oxidized [flavodoxin] + H2O + 2 H(+) = 2-C-methyl-D-erythritol 2,4-cyclic diphosphate + reduced [flavodoxin]. Its pathway is isoprenoid biosynthesis; isopentenyl diphosphate biosynthesis via DXP pathway; isopentenyl diphosphate from 1-deoxy-D-xylulose 5-phosphate: step 5/6. Converts 2C-methyl-D-erythritol 2,4-cyclodiphosphate (ME-2,4cPP) into 1-hydroxy-2-methyl-2-(E)-butenyl 4-diphosphate. The chain is 4-hydroxy-3-methylbut-2-en-1-yl diphosphate synthase (flavodoxin) from Vibrio vulnificus (strain CMCP6).